The primary structure comprises 87 residues: LYR motif-containing protein 2 (87 aa).

The transit peptide at 1–19 directs the protein to the mitochondrion; that stretch reads MGSRLPPAALTLKQFLVRQ.

This sequence belongs to the complex I LYR family.

Its subcellular location is the mitochondrion. Its function is as follows. Involved in efficient integration of the N-module into mitochondrial respiratory chain complex I. The chain is LYR motif-containing protein 2 (lyrm2) from Xenopus tropicalis (Western clawed frog).